The following is a 219-amino-acid chain: Adenylate kinase (219 aa).

Residue 10–15 participates in ATP binding; that stretch reads GAGKGT. The segment at 30–59 is NMP; that stretch reads STGDMLRAAVKAGTPLGQQAKKIMDEGGLV. Residues T31, R36, 57-59, 85-88, and Q92 each bind AMP; these read GLV and GFPR. An LID region spans residues 122-159; it reads GRRVHPGSGRVYHVTHNPPRQEGKDDVTGEDLVQREDD. ATP-binding positions include R123 and 132-133; that span reads VY. The tract at residues 128–150 is disordered; the sequence is GSGRVYHVTHNPPRQEGKDDVTG. A compositionally biased stretch (basic and acidic residues) spans 140–150; that stretch reads PRQEGKDDVTG. The AMP site is built by R156 and R167. R203 provides a ligand contact to ATP.

It belongs to the adenylate kinase family. Monomer.

It localises to the cytoplasm. The enzyme catalyses AMP + ATP = 2 ADP. It functions in the pathway purine metabolism; AMP biosynthesis via salvage pathway; AMP from ADP: step 1/1. Catalyzes the reversible transfer of the terminal phosphate group between ATP and AMP. Plays an important role in cellular energy homeostasis and in adenine nucleotide metabolism. In Halorhodospira halophila (strain DSM 244 / SL1) (Ectothiorhodospira halophila (strain DSM 244 / SL1)), this protein is Adenylate kinase.